Here is a 919-residue protein sequence, read N- to C-terminus: Plasma membrane ATPase 1 (919 aa).

Residues 1-16 (MADNAGEYHDAEKHAP) are compositionally biased toward basic and acidic residues. The disordered stretch occupies residues 1–73 (MADNAGEYHD…APAAGEAKAV (73 aa)). Topologically, residues 1–113 (MADNAGEYHD…KEELENPFLK (113 aa)) are cytoplasmic. Acidic residues predominate over residues 34–63 (QDDEPDDDIDALIEELFSEDVQEEQEDNDD). A Phosphoserine modification is found at serine 89. Residues 114 to 134 (FIMFFVGPIQFVMEMAAALAA) form a helical membrane-spanning segment. The Extracellular segment spans residues 135–138 (GLRD). A helical membrane pass occupies residues 139 to 158 (WVDFGVICALLMLNAVVGFV). Residues 159–289 (QEYQAGSIVD…GTGHFTEVLN (131 aa)) lie on the Cytoplasmic side of the membrane. A helical membrane pass occupies residues 290–311 (GIGTILLVLVLLTLFCIYTAAF). Topologically, residues 312-322 (YRSVRLARLLE) are extracellular. Residues 323–345 (YTLAITIIGVPVGLPAVVTTTMA) form a helical membrane-spanning segment. The Cytoplasmic segment spans residues 346–717 (VGAAYLAEKQ…LIIRNQLLNL (372 aa)). The active-site 4-aspartylphosphate intermediate is aspartate 376. Serine 494 is modified (phosphoserine). The Mg(2+) site is built by aspartate 632 and aspartate 636. Residues 718–736 (ELVVFIAIFADVATLAIAY) form a helical membrane-spanning segment. The Extracellular segment spans residues 737 to 752 (DNAPYSMKPVKWNLPR). A helical membrane pass occupies residues 753-772 (LWGLSTVIGIVLAIGTWITN). The Cytoplasmic portion of the chain corresponds to 773 to 824 (TTMIAQGQNRGIVQNFGVQDEVLFLEISLTENWLIFVTRCNGPFWSSIPSWQ). The chain crosses the membrane as a helical span at residues 825–845 (LSGAVLAVDILATMFCIFGWF). The Extracellular portion of the chain corresponds to 846-858 (KGGHQTSIVAVLR). Residues 859–875 (IWMYSFGIFCIMAGTYY) traverse the membrane as a helical segment. The Cytoplasmic segment spans residues 876-919 (ILSESAGFDRMMNGKPKESRNQRSIEDLVVALQRTSTRHEKGDA). Serine 899 carries the phosphoserine modification.

The protein belongs to the cation transport ATPase (P-type) (TC 3.A.3) family. Type IIIA subfamily.

The protein localises to the cell membrane. The catalysed reaction is ATP + H2O + H(+)(in) = ADP + phosphate + 2 H(+)(out). Functionally, the plasma membrane ATPase of plants and fungi is a hydrogen ion pump. The proton gradient it generates drives the active transport of nutrients by H(+)-symport. The resulting external acidification and/or internal alkinization may mediate growth responses. The protein is Plasma membrane ATPase 1 (pma1) of Schizosaccharomyces pombe (strain 972 / ATCC 24843) (Fission yeast).